Reading from the N-terminus, the 379-residue chain is Putative nucleosome assembly protein C2D10.11C (379 aa).

Positions 1 to 10 are enriched in basic and acidic residues; sequence MSKGPGDFKK. Disordered stretches follow at residues 1–30 and 345–379; these read MSKGPGDFKKSWNGFAAQTPQNTPSSDVHL and SDFNQMDEEDSEDAYTDEEDLSSDDEEILSSEISD. A compositionally biased stretch (polar residues) spans 16–28; sequence AAQTPQNTPSSDV.

Belongs to the nucleosome assembly protein (NAP) family.

It is found in the nucleus. This is Putative nucleosome assembly protein C2D10.11C from Schizosaccharomyces pombe (strain 972 / ATCC 24843) (Fission yeast).